Consider the following 58-residue polypeptide: Large ribosomal subunit protein uL30 (58 aa).

The protein belongs to the universal ribosomal protein uL30 family. In terms of assembly, part of the 50S ribosomal subunit.

The chain is Large ribosomal subunit protein uL30 from Pelobacter propionicus (strain DSM 2379 / NBRC 103807 / OttBd1).